Here is a 451-residue protein sequence, read N- to C-terminus: Signal transduction histidine-protein kinase ArlS (451 aa).

Helical transmembrane passes span 11–31 (IIVT…IIIF) and 156–176 (IIAL…SYVF). The HAMP domain maps to 178 to 231 (TQITKPLVSLSNKMIEIRRDGFQNKLQLNTNYEEIDNLANTFNEMMSQIEESFN). In terms of domain architecture, Histidine kinase spans 239-451 (DASHELRTPL…NKGTTFKIIF (213 aa)). Histidine 242 carries the phosphohistidine; by autocatalysis modification.

Post-translationally, autophosphorylated.

It localises to the cell membrane. It catalyses the reaction ATP + protein L-histidine = ADP + protein N-phospho-L-histidine.. Its function is as follows. Member of the two-component regulatory system ArlS/ArlR involved in the regulation of adhesion, autolysis, multidrug resistance and virulence. ArlS probably functions as a sensor protein kinase which is autophosphorylated at a histidine residue and transfers its phosphate group to ArlR. The sequence is that of Signal transduction histidine-protein kinase ArlS (arlS) from Staphylococcus aureus (strain USA300).